The chain runs to 233 residues: MAFRARVLTLYPEMFPGHLGFSLAGKAMERGQWSLDLVQIRDFATDRHRTVDDTPAGGGAGMVLKADVLARAIDSAGENDPRPRLLMSPRGRPLTQQRVRELAAGDGVVIVCGRFEGVDQRVIEARGLEEVSVGDYVLSGGEPAALIVLDAIIRILPGVMGNDLSGLHESFEGGLLEHPHYTRPQEWEGREIPSILTSGNHGAIEKWRHEEAVRLTRERRPDLFEKVESEKNG.

S-adenosyl-L-methionine contacts are provided by residues Gly113 and 133 to 138 (VGDYVL).

Belongs to the RNA methyltransferase TrmD family. As to quaternary structure, homodimer.

The protein localises to the cytoplasm. It carries out the reaction guanosine(37) in tRNA + S-adenosyl-L-methionine = N(1)-methylguanosine(37) in tRNA + S-adenosyl-L-homocysteine + H(+). Specifically methylates guanosine-37 in various tRNAs. This chain is tRNA (guanine-N(1)-)-methyltransferase, found in Rhizobium etli (strain ATCC 51251 / DSM 11541 / JCM 21823 / NBRC 15573 / CFN 42).